The chain runs to 282 residues: Phosphate import ATP-binding protein PstB (282 aa).

One can recognise an ABC transporter domain in the interval 36–277 (IEVKNLNFFY…PARKETEDYI (242 aa)). ATP is bound at residue 68-75 (GPSGCGKS).

Belongs to the ABC transporter superfamily. Phosphate importer (TC 3.A.1.7) family. As to quaternary structure, the complex is composed of two ATP-binding proteins (PstB), two transmembrane proteins (PstC and PstA) and a solute-binding protein (PstS).

The protein resides in the cell inner membrane. It carries out the reaction phosphate(out) + ATP + H2O = ADP + 2 phosphate(in) + H(+). Functionally, part of the ABC transporter complex PstSACB involved in phosphate import. Responsible for energy coupling to the transport system. The protein is Phosphate import ATP-binding protein PstB of Burkholderia pseudomallei (strain 1710b).